Consider the following 464-residue polypeptide: Fumarate hydratase class II (464 aa).

Substrate-binding positions include serine 98–threonine 100, histidine 129–aspartate 132, serine 139–asparagine 141, and threonine 187. The Proton donor/acceptor role is filled by histidine 188. Residue serine 318 is part of the active site. Substrate is bound by residues serine 319 and lysine 324–asparagine 326.

This sequence belongs to the class-II fumarase/aspartase family. Fumarase subfamily. As to quaternary structure, homotetramer.

The protein resides in the cytoplasm. It catalyses the reaction (S)-malate = fumarate + H2O. It functions in the pathway carbohydrate metabolism; tricarboxylic acid cycle; (S)-malate from fumarate: step 1/1. In terms of biological role, involved in the TCA cycle. Catalyzes the stereospecific interconversion of fumarate to L-malate. The chain is Fumarate hydratase class II from Haemophilus ducreyi (strain 35000HP / ATCC 700724).